A 353-amino-acid polypeptide reads, in one-letter code: tRNA-splicing endonuclease (353 aa).

Active-site residues include Tyr289, His300, and Lys331.

The protein belongs to the tRNA-intron endonuclease family. Archaeal long subfamily. As to quaternary structure, homodimer.

It catalyses the reaction pretRNA = a 3'-half-tRNA molecule with a 5'-OH end + a 5'-half-tRNA molecule with a 2',3'-cyclic phosphate end + an intron with a 2',3'-cyclic phosphate and a 5'-hydroxyl terminus.. In terms of biological role, endonuclease that removes tRNA introns. Cleaves pre-tRNA at the 5'- and 3'-splice sites to release the intron. The products are an intron and two tRNA half-molecules bearing 2',3' cyclic phosphate and 5'-OH termini. Recognizes a pseudosymmetric substrate in which 2 bulged loops of 3 bases are separated by a stem of 4 bp. The protein is tRNA-splicing endonuclease of Methanosarcina mazei (strain ATCC BAA-159 / DSM 3647 / Goe1 / Go1 / JCM 11833 / OCM 88) (Methanosarcina frisia).